The following is a 520-amino-acid chain: Cytochrome P450 716A67 (520 aa).

A helical membrane pass occupies residues 4–24 (SLAIYYGIILITVTLGLVYTW). C466 lines the heme pocket.

This sequence belongs to the cytochrome P450 family. Heme is required as a cofactor.

It is found in the membrane. In terms of biological role, catalyzes hydroxylation at the C-2 position of different intermediates of the hemolytic sapogenin biosynthetic pathway downstream of oleanolic acid synthesis. In Medicago truncatula (Barrel medic), this protein is Cytochrome P450 716A67.